The primary structure comprises 238 residues: Ureidoacrylate amidohydrolase RutB (238 aa).

Aspartate 35 serves as the catalytic Proton acceptor. Lysine 144 is an active-site residue. The active-site Nucleophile is the cysteine 177.

Belongs to the isochorismatase family. RutB subfamily.

It carries out the reaction (Z)-3-ureidoacrylate + H2O + H(+) = (Z)-3-aminoacrylate + NH4(+) + CO2. The enzyme catalyses (Z)-3-ureidoacrylate + H2O = (Z)-3-aminoacrylate + carbamate + H(+). The catalysed reaction is (Z)-2-methylureidoacrylate + H2O + H(+) = (Z)-2-methylaminoacrylate + NH4(+) + CO2. In terms of biological role, hydrolyzes ureidoacrylate to form aminoacrylate and carbamate. The carbamate hydrolyzes spontaneously, thereby releasing one of the nitrogen atoms of the pyrimidine ring as ammonia and one of its carbon atoms as CO2. The chain is Ureidoacrylate amidohydrolase RutB from Caulobacter vibrioides (strain NA1000 / CB15N) (Caulobacter crescentus).